We begin with the raw amino-acid sequence, 204 residues long: Holliday junction branch migration complex subunit RuvA (204 aa).

Residues 1–64 (MIGKLKGTIE…EDQIRLFGFM (64 aa)) are domain I. Residues 65 to 143 (AVLEREWFNL…AFAGEATNIG (79 aa)) are domain II. The tract at residues 144–151 (FKQELGEG) is flexible linker. Residues 152–204 (VAPAPVSDAVSALTNLGYSRDQAANAIAAAMKVAGDEADSAKLIRLGLKELSR) form a domain III region.

Belongs to the RuvA family. In terms of assembly, homotetramer. Forms an RuvA(8)-RuvB(12)-Holliday junction (HJ) complex. HJ DNA is sandwiched between 2 RuvA tetramers; dsDNA enters through RuvA and exits via RuvB. An RuvB hexamer assembles on each DNA strand where it exits the tetramer. Each RuvB hexamer is contacted by two RuvA subunits (via domain III) on 2 adjacent RuvB subunits; this complex drives branch migration. In the full resolvosome a probable DNA-RuvA(4)-RuvB(12)-RuvC(2) complex forms which resolves the HJ.

It localises to the cytoplasm. The RuvA-RuvB-RuvC complex processes Holliday junction (HJ) DNA during genetic recombination and DNA repair, while the RuvA-RuvB complex plays an important role in the rescue of blocked DNA replication forks via replication fork reversal (RFR). RuvA specifically binds to HJ cruciform DNA, conferring on it an open structure. The RuvB hexamer acts as an ATP-dependent pump, pulling dsDNA into and through the RuvAB complex. HJ branch migration allows RuvC to scan DNA until it finds its consensus sequence, where it cleaves and resolves the cruciform DNA. The sequence is that of Holliday junction branch migration complex subunit RuvA from Rhizobium rhizogenes (strain K84 / ATCC BAA-868) (Agrobacterium radiobacter).